The sequence spans 591 residues: Vomeromodulin (591 aa).

The N-terminal stretch at 1–18 (MWVLQALAIMLSIQAGTL) is a signal peptide. The segment at 151–172 (NEGNGDSSKPSSGSKATGGLGQ) is disordered. N-linked (GlcNAc...) asparagine glycans are attached at residues asparagine 421 and asparagine 516.

N-glycosylated. The N-glycans consist mainly of complex sialylated and fucosylated biantennary structures. As to expression, expressed in lung. Not detected in other tissues tested (at protein level).

It localises to the secreted. This chain is Vomeromodulin, found in Mus musculus (Mouse).